The following is a 243-amino-acid chain: ATP synthase subunit a, chloroplastic (243 aa).

5 helical membrane-spanning segments follow: residues 32 to 52 (GQVLLVSWFVLAVIFGLSFVG), 96 to 116 (TVFLFIFVSNWSGALLPWALI), 129 to 149 (DINTTVALALLTSISYFYAGI), 195 to 215 (LVVGVLVSLVPLIIPIPIMLL), and 216 to 236 (GCFTSAIQALVFATLAGAYIG).

It belongs to the ATPase A chain family. In terms of assembly, F-type ATPases have 2 components, CF(1) - the catalytic core - and CF(0) - the membrane proton channel. CF(1) has five subunits: alpha(3), beta(3), gamma(1), delta(1), epsilon(1). CF(0) has four main subunits: a, b, b' and c.

The protein localises to the plastid. The protein resides in the chloroplast thylakoid membrane. In terms of biological role, key component of the proton channel; it plays a direct role in the translocation of protons across the membrane. This chain is ATP synthase subunit a, chloroplastic, found in Tetradesmus obliquus (Green alga).